The chain runs to 64 residues: Chromatin protein Cren7 (64 aa).

This sequence belongs to the Cren7 family. Monomer. In terms of processing, methylated at multiple sites, to varying extents.

Its subcellular location is the chromosome. The protein resides in the cytoplasm. In terms of biological role, a chromatin protein, binds double-stranded DNA without sequence specificity. Constrains negative DNA supercoils. The chain is Chromatin protein Cren7 from Aeropyrum pernix (strain ATCC 700893 / DSM 11879 / JCM 9820 / NBRC 100138 / K1).